A 196-amino-acid polypeptide reads, in one-letter code: 7-methyl-GTP pyrophosphatase (196 aa).

The Proton acceptor role is filled by Asp-69.

It belongs to the Maf family. YceF subfamily. A divalent metal cation is required as a cofactor.

Its subcellular location is the cytoplasm. The catalysed reaction is N(7)-methyl-GTP + H2O = N(7)-methyl-GMP + diphosphate + H(+). In terms of biological role, nucleoside triphosphate pyrophosphatase that hydrolyzes 7-methyl-GTP (m(7)GTP). May have a dual role in cell division arrest and in preventing the incorporation of modified nucleotides into cellular nucleic acids. The chain is 7-methyl-GTP pyrophosphatase from Photorhabdus laumondii subsp. laumondii (strain DSM 15139 / CIP 105565 / TT01) (Photorhabdus luminescens subsp. laumondii).